The sequence spans 448 residues: Potassium/proton antiporter CemA (448 aa).

The next 4 helical transmembrane spans lie at 47 to 67, 213 to 233, 314 to 334, and 395 to 415; these read IVFY…LSLL, LSSL…STLF, IISH…LFVA, and IISC…KYLI.

This sequence belongs to the CemA family.

The protein resides in the plastid membrane. It carries out the reaction K(+)(in) + H(+)(out) = K(+)(out) + H(+)(in). May be involved in proton extrusion. This is Potassium/proton antiporter CemA from Aneura mirabilis (Parasitic liverwort).